The following is a 232-amino-acid chain: Large ribosomal subunit protein uL1 (232 aa).

Belongs to the universal ribosomal protein uL1 family. In terms of assembly, part of the 50S ribosomal subunit.

Functionally, binds directly to 23S rRNA. The L1 stalk is quite mobile in the ribosome, and is involved in E site tRNA release. Protein L1 is also a translational repressor protein, it controls the translation of the L11 operon by binding to its mRNA. In Bartonella quintana (strain Toulouse) (Rochalimaea quintana), this protein is Large ribosomal subunit protein uL1.